The following is a 344-amino-acid chain: Follistatin (344 aa).

The N-terminal stretch at 1–29 is a signal peptide; sequence MARPRHQPGGLCLLLLLLCQFMEDRSAQA. Residues 30–103 form the TB domain; it reads GNCWLRQAKN…TCENVDCGPG (74 aa). 8 cysteine pairs are disulfide-bonded: Cys32/Cys55, Cys42/Cys88, Cys56/Cys91, Cys95/Cys106, Cys100/Cys116, Cys118/Cys150, Cys122/Cys143, and Cys132/Cys164. Residues 94-117 enclose the Follistatin-like 1 domain; sequence TCENVDCGPGKKCRMNKKNKPRCV. Kazal-like domains lie at 112-166, 186-241, and 261-318; these read NKPR…KCKK, NAYC…KCIK, and KVGR…SCNS. Asn124 is a glycosylation site (N-linked (GlcNAc...) asparagine). Positions 167–190 constitute a Follistatin-like 2 domain; sequence TCRDVFCPGSSTCVVDQTNNAYCV. Cystine bridges form between Cys192-Cys225, Cys196-Cys218, and Cys207-Cys239. The region spanning 244–268 is the Follistatin-like 3 domain; that stretch reads SCDDIQCTGGKKCLWDFKVGRGRCS. Cystine bridges form between Cys270–Cys302, Cys274–Cys295, and Cys284–Cys316. N-linked (GlcNAc...) asparagine glycosylation occurs at Asn288. The tract at residues 316–344 is disordered; the sequence is CNSISEDTEDEEEDEDQDYSFPISSILEW. The segment covering 321–333 has biased composition (acidic residues); it reads EDTEDEEEDEDQD.

In terms of assembly, interacts with GDF11. Interacts with activin A/INHBA. Interacts with myostatin/MSTN.

It localises to the secreted. The protein resides in the nucleus. Its subcellular location is the nucleolus. Functionally, multifunctional regulatory protein whose primary function is to antagonize members of the transforming growth factor beta (TGF-beta) superfamily including activin, myostatin, GDF11 or bone morphogenetic proteins (BMPs). Mechanistically, binds to these ligands in the extracellular space, blocking their type II receptor-binding site to inhibit downstream signaling. Plays an essential role in muscle fiber formation and growth both by preventing the repressive effects of myostatin and through SMAD3/AKT/mTOR signaling independently of myostatin. Also promotes neural differentiation by antagonizing the action BMP4. Acts as a specific inhibitor of the biosynthesis and secretion of pituitary follicle stimulating hormone (FSH) by sequestering activin A/INHBA. On the other hand, translocates into the nucleus where it down-regulates rRNA synthesis and ribosome biogenesis to maintain cellular energy homeostasis by binding to rDNA. In Bos taurus (Bovine), this protein is Follistatin.